Reading from the N-terminus, the 381-residue chain is Protein COS8 (381 aa).

The Extracellular segment spans residues 1 to 42 (MKENEVKDEKSVDVLSFKQLEFQKTVLPQDVFRNELTWFCYE). Residues 43–63 (IYKSLAFRIWMLLWLPLSVWW) traverse the membrane as a helical segment. The Cytoplasmic segment spans residues 64–72 (KLSSNWIHP). The chain crosses the membrane as a helical span at residues 73–93 (LIVSLLVLFLGPFFVLVICGL). Residues 94–237 (SRKRSLSKQL…WILKRIFNLR (144 aa)) lie on the Extracellular side of the membrane. Residues 238–258 (CLPLFLYYFLIVYTSGNADLI) form a helical membrane-spanning segment. The Cytoplasmic portion of the chain corresponds to 259 to 381 (SRFLFPVVMF…QSARNEKPLK (123 aa)).

It belongs to the DUP/COS family.

Its subcellular location is the membrane. The sequence is that of Protein COS8 (COS8) from Saccharomyces cerevisiae (strain ATCC 204508 / S288c) (Baker's yeast).